We begin with the raw amino-acid sequence, 192 residues long: Cytochrome c oxidase assembly protein CtaG (192 aa).

At 1-9 (MSLSPHQKT) the chain is on the cytoplasmic side. The chain crosses the membrane as a helical; Signal-anchor for type II membrane protein span at residues 10-30 (AGWLVGVVVVMGAASFAAVPF). Topologically, residues 31–192 (YDWFCRVTGF…AARPAGIDVN (162 aa)) are periplasmic.

The protein belongs to the COX11/CtaG family.

Its subcellular location is the cell inner membrane. Its function is as follows. Exerts its effect at some terminal stage of cytochrome c oxidase synthesis, probably by being involved in the insertion of the copper B into subunit I. This Cereibacter sphaeroides (strain ATCC 17025 / ATH 2.4.3) (Rhodobacter sphaeroides) protein is Cytochrome c oxidase assembly protein CtaG.